The sequence spans 346 residues: Protein SHI RELATED SEQUENCE 5 (346 aa).

The interval 7–31 (LGGRDNNSNNNKQDHHQVDKDHHHQ) is disordered. The span at 18-31 (KQDHHQVDKDHHHQ) shows a compositional bias: basic and acidic residues. Cys125, Cys128, Cys136, Cys141, Cys145, and Cys152 together coordinate Zn(2+). A DNA-binding region (zn(2)-C6 fungal-type; degenerate) is located at residues 125–152 (CQDCGNQAKKDCPHMRCRTCCKSRGFHC). Residues 175–186 (SLQHHSASSRET) are compositionally biased toward polar residues. Residues 175–215 (SLQHHSASSRETQNAKRLREASGGDNNDDKDHSGGGGSALA) form a disordered region. A compositionally biased stretch (basic and acidic residues) spans 187 to 207 (QNAKRLREASGGDNNDDKDHS). Residues 269 to 272 (IGGH) carry the Required for homo- and heterodimerization motif.

It belongs to the SHI protein family.

Its subcellular location is the nucleus. Transcription activator that binds DNA on 5'-ACTCTAC-3' and promotes auxin homeostasis-regulating gene expression (e.g. YUC genes), as well as genes affecting stamen development, cell expansion and timing of flowering. Synergistically with other SHI-related proteins, regulates gynoecium, stamen and leaf development in a dose-dependent manner, controlling apical-basal patterning. Promotes style and stigma formation, and influences vascular development during gynoecium development. May also have a role in the formation and/or maintenance of the shoot apical meristem (SAM). The chain is Protein SHI RELATED SEQUENCE 5 (SRS5) from Arabidopsis thaliana (Mouse-ear cress).